The sequence spans 423 residues: Steroid hormone receptor ERR1 (423 aa).

A disordered region spans residues 1–67 (MSSQVVGIEP…GAGPGEQGGG (67 aa)). Residues 1-76 (MSSQVVGIEP…GKLVLSSLPK (76 aa)) are repressor domain. K14 participates in a covalent cross-link: Glycyl lysine isopeptide (Lys-Gly) (interchain with G-Cter in SUMO). Residues S19 and S22 each carry the phosphoserine modification. Positions 58–67 (GAGPGEQGGG) are enriched in gly residues. Residues 76–151 (KRLCLVCGDV…VGMLKEGVRL (76 aa)) constitute a DNA-binding region (nuclear receptor). 2 consecutive NR C4-type zinc fingers follow at residues 79-99 (CLVCGDVASGYHYGVASCEAC) and 115-134 (CPASNECEITKRRRKACQAC). 4 positions are modified to N6-acetyllysine; by PCAF/KAT2B: K129, K138, K160, and K162. Residue K189 forms a Glycyl lysine isopeptide (Lys-Gly) (interchain with G-Cter in SUMO2) linkage. An NR LBD domain is found at 193–421 (PVNALVSHLL…KLFLEMLEAM (229 aa)). K403 participates in a covalent cross-link: Glycyl lysine isopeptide (Lys-Gly) (interchain with G-Cter in SUMO); alternate. A Glycyl lysine isopeptide (Lys-Gly) (interchain with G-Cter in SUMO2); alternate cross-link involves residue K403. The AF-2 domain stretch occupies residues 403–423 (KLEGKVPMHKLFLEMLEAMMD).

The protein belongs to the nuclear hormone receptor family. NR3 subfamily. In terms of assembly, binds DNA as a monomer or a homodimer. Interacts (via the AF2 domain) with coactivator PPARGC1A (via the L3 motif); the interaction greatly enhances transcriptional activity of genes involved in energy metabolism. Interacts with PIAS4; the interaction enhances sumoylation. Interacts with MAPK15; promotes re-localization of ESRRA to the cytoplasm through a XPO1-dependent mechanism then inhibits ESRRA transcriptional activity. In terms of processing, phosphorylation on Ser-19 enhances sumoylation on Lys-14 increasing repression of transcriptional activity. Post-translationally, sumoylated with SUMO2. Main site is Lys-14 which is enhanced by phosphorylation on Ser-19, cofactor activation, and by interaction with PIAS4. Sumoylation enhances repression of transcriptional activity, but has no effect on subcellular location nor on DNA binding. Reversibly acetylated. Acetylation by PCAF/KAT2 at Lys-129, Lys-138, Lys-160 and Lys-162 and PCAF/KAT2 decreases transcriptional activity probably by inhibiting DNA-binding activity; deacetylation involves SIRT1 and HDAC8 and increases DNA-binding.

It localises to the nucleus. It is found in the cytoplasm. In terms of biological role, binds to an ERR-alpha response element (ERRE) containing a single consensus half-site, 5'-TNAAGGTCA-3'. Can bind to the medium-chain acyl coenzyme A dehydrogenase (MCAD) response element NRRE-1 and may act as an important regulator of MCAD promoter. Binds to the C1 region of the lactoferrin gene promoter. Requires dimerization and the coactivator, PGC-1A, for full activity. The ERRalpha/PGC1alpha complex is a regulator of energy metabolism. Induces the expression of PERM1 in the skeletal muscle. The sequence is that of Steroid hormone receptor ERR1 (ESRRA) from Homo sapiens (Human).